Reading from the N-terminus, the 402-residue chain is AA9 family lytic polysaccharide monooxygenase E (402 aa).

Positions 1 to 16 (MSRLVSFASLLAAVNA) are cleaved as a signal peptide. H17 lines the Cu(2+) pocket. Intrachain disulfides connect C72-C194 and C113-C117. An N-linked (GlcNAc...) asparagine glycan is attached at N75. A Cu(2+)-binding site is contributed by H102. N-linked (GlcNAc...) asparagine glycosylation occurs at N154. O2 is bound by residues H180 and Q189. Y191 serves as a coordination point for Cu(2+). The region spanning 364 to 400 (GSNPLYAQCGGLNFKGASGCVAGATCKKMNPYYSQCV) is the CBM1 domain.

It belongs to the polysaccharide monooxygenase AA9 family. The cofactor is Cu(2+).

The protein localises to the secreted. The enzyme catalyses [(1-&gt;4)-beta-D-glucosyl]n+m + reduced acceptor + O2 = 4-dehydro-beta-D-glucosyl-[(1-&gt;4)-beta-D-glucosyl]n-1 + [(1-&gt;4)-beta-D-glucosyl]m + acceptor + H2O.. Functionally, lytic polysaccharide monooxygenase (LPMO) that depolymerizes crystalline and amorphous polysaccharides via the oxidation of scissile alpha- or beta-(1-4)-glycosidic bonds, yielding C1 or C4 oxidation products. Catalysis by LPMOs requires the reduction of the active-site copper from Cu(II) to Cu(I) by a reducing agent and H(2)O(2) or O(2) as a cosubstrate. The chain is AA9 family lytic polysaccharide monooxygenase E from Emericella nidulans (strain FGSC A4 / ATCC 38163 / CBS 112.46 / NRRL 194 / M139) (Aspergillus nidulans).